Consider the following 330-residue polypeptide: GTP 3',8-cyclase (330 aa).

A Radical SAM core domain is found at 9 to 225 (RFGRTVNYVR…IRRHHELIPA (217 aa)). Arg18 is a binding site for GTP. [4Fe-4S] cluster contacts are provided by Cys25 and Cys29. Position 31 (Tyr31) interacts with S-adenosyl-L-methionine. A [4Fe-4S] cluster-binding site is contributed by Cys32. A GTP-binding site is contributed by Arg67. An S-adenosyl-L-methionine-binding site is contributed by Gly71. Thr97 contacts GTP. Residue Ser121 participates in S-adenosyl-L-methionine binding. Position 158 (Lys158) interacts with GTP. Residue Met192 coordinates S-adenosyl-L-methionine. 2 residues coordinate [4Fe-4S] cluster: Cys256 and Cys259. GTP is bound at residue 261 to 263 (RVR). Position 273 (Cys273) interacts with [4Fe-4S] cluster.

It belongs to the radical SAM superfamily. MoaA family. In terms of assembly, monomer and homodimer. It depends on [4Fe-4S] cluster as a cofactor.

It catalyses the reaction GTP + AH2 + S-adenosyl-L-methionine = (8S)-3',8-cyclo-7,8-dihydroguanosine 5'-triphosphate + 5'-deoxyadenosine + L-methionine + A + H(+). It participates in cofactor biosynthesis; molybdopterin biosynthesis. Functionally, catalyzes the cyclization of GTP to (8S)-3',8-cyclo-7,8-dihydroguanosine 5'-triphosphate. This chain is GTP 3',8-cyclase, found in Marinobacter nauticus (strain ATCC 700491 / DSM 11845 / VT8) (Marinobacter aquaeolei).